Reading from the N-terminus, the 358-residue chain is Nuclease EXOG, mitochondrial (358 aa).

Residue H132 is the Proton acceptor of the active site. Residue N163 participates in a divalent metal cation binding.

The protein belongs to the DNA/RNA non-specific endonuclease family. As to quaternary structure, homodimer. A divalent metal cation is required as a cofactor.

Its subcellular location is the mitochondrion inner membrane. Endo/exonuclease with nicking activity towards supercoiled DNA, a preference for single-stranded DNA and 5'-3' exonuclease activity. This Xenopus laevis (African clawed frog) protein is Nuclease EXOG, mitochondrial (exog).